Here is a 66-residue protein sequence, read N- to C-terminus: Large ribosomal subunit protein bL35 (66 aa).

The protein belongs to the bacterial ribosomal protein bL35 family.

The protein is Large ribosomal subunit protein bL35 of Borreliella burgdorferi (strain ATCC 35210 / DSM 4680 / CIP 102532 / B31) (Borrelia burgdorferi).